Here is a 430-residue protein sequence, read N- to C-terminus: Adenylosuccinate synthetase (430 aa).

GTP is bound by residues 12–18 (GDEGKGK) and 40–42 (GHT). The active-site Proton acceptor is the D13. Mg(2+)-binding residues include D13 and G40. IMP is bound by residues 13–16 (DEGK), 38–41 (NAGH), T130, R144, Q224, T239, and R303. The active-site Proton donor is H41. 299 to 305 (TVTGRKR) serves as a coordination point for substrate. GTP is bound by residues R305, 331–333 (KLD), and 413–415 (STS).

Belongs to the adenylosuccinate synthetase family. Homodimer. Mg(2+) is required as a cofactor.

It is found in the cytoplasm. The catalysed reaction is IMP + L-aspartate + GTP = N(6)-(1,2-dicarboxyethyl)-AMP + GDP + phosphate + 2 H(+). Its pathway is purine metabolism; AMP biosynthesis via de novo pathway; AMP from IMP: step 1/2. Its function is as follows. Plays an important role in the de novo pathway of purine nucleotide biosynthesis. Catalyzes the first committed step in the biosynthesis of AMP from IMP. In Paracoccus denitrificans (strain Pd 1222), this protein is Adenylosuccinate synthetase.